Consider the following 649-residue polypeptide: Acid beta-fructofuranosidase (649 aa).

Residues 1–22 (MEHHKPLLPTSSHAAPTSSTRK) are Cytoplasmic-facing. Positions 1–101 (MEHHKPLLPT…NLLFAGEGGA (101 aa)) are cleaved as a propeptide — removed in mature form. The chain crosses the membrane as a helical; Signal-anchor for type II membrane protein span at residues 23–43 (DLLFVLCGLLFLSSLVAYGGY). Over 44–649 (RASGVPHAHL…PFPFNPDQKS (606 aa)) the chain is Lumenal. Residues 52-75 (HLSSPTSNHQQDHQSPTSLPSSKW) are disordered. Over residues 54-72 (SSPTSNHQQDHQSPTSLPS) the composition is skewed to polar residues. Substrate-binding positions include 127–130 (WMND), glutamine 146, tryptophan 154, and 189–190 (WT). Aspartate 130 is a catalytic residue. The N-linked (GlcNAc...) (complex) asparagine glycan is linked to asparagine 210. 253-254 (RD) serves as a coordination point for substrate. The N-linked (GlcNAc...) (complex) asparagine glycan is linked to asparagine 275. Positions 308 and 341 each coordinate substrate. Residues cysteine 498 and cysteine 546 are joined by a disulfide bond. Asparagine 618 is a glycosylation site (N-linked (GlcNAc...) (high mannose) asparagine).

The protein belongs to the glycosyl hydrolase 32 family. As to quaternary structure, present in two forms, a 70 kDa monomer and a heterodimer of the 30 kDa and 38 kDa subunits. The ratio of the levels of the two forms within cells appears to be regulated developmentally.

The protein localises to the membrane. The protein resides in the vacuole lumen. It catalyses the reaction Hydrolysis of terminal non-reducing beta-D-fructofuranoside residues in beta-D-fructofuranosides.. It participates in glycan biosynthesis; sucrose metabolism. Possible role in the continued mobilization of sucrose to sink organs. This is Acid beta-fructofuranosidase (INVA) from Vigna radiata var. radiata (Mung bean).